The following is a 183-amino-acid chain: MSESSIKIENVVASTKLAEEFDLTVIESEFEGAEYNKQKFPGLVYRVSDPKAAFLVFTSGKVVCTGAKNVADVHTVIGNMAKKLNSIGIKTMENPQITVQNIVASADLHTILNLNAIAIGLGLENIEYEPEQFPGLVYRIDEPKVVVLIFSSGKLVVTGGKSPEDCERGVEVVRQQLDNMGLL.

2 consecutive repeat copies span residues 8-84 (IENV…AKKL) and 99-177 (VQNI…RQQL).

It belongs to the TBP family.

Functionally, general factor that plays a role in the activation of archaeal genes transcribed by RNA polymerase. Binds specifically to the TATA box promoter element which lies close to the position of transcription initiation. The sequence is that of TATA-box-binding protein 1 from Methanosarcina acetivorans (strain ATCC 35395 / DSM 2834 / JCM 12185 / C2A).